Reading from the N-terminus, the 220-residue chain is MASAGMQILGVVLTLLGWVNGLVSCALPMWKVTAFIGNSIVVAQVVWEGLWMSCVVQSTGQMQCKVYDSLLALPQDLQAARALCVIALLVALFGLLVYLAGAKCTTCVEEKDSKARLVLTSGIVFVISGVLTLIPVCWTAHAIIRDFYNPLVAEAQKRELGASLYLGWAASGLLLLGGGLLCCTCPSGGSQGPSHYMARYSTSAPAISRGPSEYPTKNYV.

Topologically, residues 1 to 7 are cytoplasmic; the sequence is MASAGMQ. A helical membrane pass occupies residues 8–28; it reads ILGVVLTLLGWVNGLVSCALP. Residues 29–81 lie on the Extracellular side of the membrane; that stretch reads MWKVTAFIGNSIVVAQVVWEGLWMSCVVQSTGQMQCKVYDSLLALPQDLQAAR. A helical membrane pass occupies residues 82-102; that stretch reads ALCVIALLVALFGLLVYLAGA. Residues 103 to 116 are Cytoplasmic-facing; it reads KCTTCVEEKDSKAR. Residues 117–137 traverse the membrane as a helical segment; it reads LVLTSGIVFVISGVLTLIPVC. Over 138–160 the chain is Extracellular; that stretch reads WTAHAIIRDFYNPLVAEAQKREL. A helical membrane pass occupies residues 161-181; that stretch reads GASLYLGWAASGLLLLGGGLL. Topologically, residues 182–220 are cytoplasmic; the sequence is CCTCPSGGSQGPSHYMARYSTSAPAISRGPSEYPTKNYV. 4 positions are modified to phosphoserine: Ser-201, Ser-203, Ser-208, and Ser-212. Positions 219 to 220 are interactions with TJP1, TJP2 and TJP3; that stretch reads YV.

The protein belongs to the claudin family. As to quaternary structure, directly interacts with TJP1/ZO-1, TJP2/ZO-2 and TJP3/ZO-3. Interacts with CLDN1, CD81 and OCLN. As to expression, expressed in the liver, in peripheral blood mononuclear cells and hepatocarcinoma cell lines.

The protein localises to the cell junction. Its subcellular location is the tight junction. It localises to the cell membrane. In terms of biological role, plays a major role in tight junction-specific obliteration of the intercellular space. (Microbial infection) Acts as a receptor for hepatitis C virus (HCV) entry into hepatic cells. The chain is Claudin-6 (CLDN6) from Homo sapiens (Human).